The following is a 591-amino-acid chain: L-fucose isomerase (591 aa).

Active-site proton acceptor residues include Glu337 and Asp361. Positions 337, 361, and 528 each coordinate Mn(2+).

This sequence belongs to the L-fucose isomerase family. In terms of assembly, homohexamer. Mn(2+) is required as a cofactor.

It localises to the cytoplasm. The enzyme catalyses L-fucose = L-fuculose. It participates in carbohydrate degradation; L-fucose degradation; L-lactaldehyde and glycerone phosphate from L-fucose: step 1/3. In terms of biological role, converts the aldose L-fucose into the corresponding ketose L-fuculose. The protein is L-fucose isomerase of Escherichia coli O139:H28 (strain E24377A / ETEC).